Reading from the N-terminus, the 554-residue chain is Glucose-6-phosphate isomerase (554 aa).

Serine 2 carries the post-translational modification N-acetylserine. Phosphothreonine is present on threonine 53. D-glucose 6-phosphate is bound by residues 168–169 (GS), 218–223 (SKTFTT), glutamine 363, glutamate 367, histidine 398, and lysine 520. Threonine 220 carries the post-translational modification Phosphothreonine. The active-site Proton donor is the glutamate 367. Residues histidine 398 and lysine 520 contribute to the active site.

It belongs to the GPI family. Homodimer.

The protein localises to the cytoplasm. It is found in the cytosol. It catalyses the reaction alpha-D-glucose 6-phosphate = beta-D-fructose 6-phosphate. It participates in carbohydrate degradation; glycolysis; D-glyceraldehyde 3-phosphate and glycerone phosphate from D-glucose: step 2/4. Strongly inhibited by the polyol (sugar alcohol) phosphate D-glucitol 6-phosphate (D-sorbitol 6-phosphate). Also inhibited by the polyol (sugar alcohol) phosphate D-ribitol 5-phosphate. In terms of biological role, in the cytoplasm, catalyzes the conversion of glucose-6-phosphate to fructose-6-phosphate, the second step in glycolysis, and the reverse reaction during gluconeogenesis. The chain is Glucose-6-phosphate isomerase (PGI1) from Saccharomyces cerevisiae (strain ATCC 204508 / S288c) (Baker's yeast).